Here is a 402-residue protein sequence, read N- to C-terminus: N-acetyltransferase Eis (402 aa).

An N-acetyltransferase domain is found at 3–154; that stretch reads VTLCSPTEDD…RFARFHADAP (152 aa). Acetyl-CoA contacts are provided by residues 85 to 87, 93 to 98, and 121 to 122; these read VAV, RRGLLR, and SE. The Proton donor role is filled by Y126. F402 serves as the catalytic Proton acceptor; via carboxylate.

The protein belongs to the acetyltransferase Eis family. As to quaternary structure, homohexamer; trimer of dimers.

The protein resides in the secreted. It localises to the host cytoplasmic vesicle. It is found in the host phagosome. Its subcellular location is the extracellular vesicle. The protein localises to the bacterial extracellular vesicle. The protein resides in the host extracellular space. The enzyme catalyses L-lysyl-[protein] + acetyl-CoA = N(6)-acetyl-L-lysyl-[protein] + CoA + H(+). In terms of biological role, effector that is released into the host cell and affects host immune responses. Acts as an acetyltransferase that acetylates lysine residues of host proteins. This Mycobacterium bovis (strain BCG / Pasteur 1173P2) protein is N-acetyltransferase Eis.